The chain runs to 126 residues: Methylglyoxal synthase (126 aa).

In terms of domain architecture, MGS-like spans 1 to 126 (MKALALIAHD…IAWIRKGTPQ (126 aa)). Substrate is bound by residues His9, Lys13, 35-38 (TGTT), and 55-56 (SG). The active-site Proton donor/acceptor is Asp61. Position 88 (His88) interacts with substrate.

Belongs to the methylglyoxal synthase family.

It carries out the reaction dihydroxyacetone phosphate = methylglyoxal + phosphate. Catalyzes the formation of methylglyoxal from dihydroxyacetone phosphate. The polypeptide is Methylglyoxal synthase (Thermus thermophilus (strain ATCC BAA-163 / DSM 7039 / HB27)).